The following is a 178-amino-acid chain: uncharacterized protein (178 aa).

The protein resides in the mitochondrion. This is an uncharacterized protein from Paramecium tetraurelia.